The following is a 540-amino-acid chain: Chaperonin GroEL (540 aa).

ATP-binding positions include 29–32, 86–90, Gly-413, 476–478, and Asp-492; these read TLGP, DGTTT, and NAA.

This sequence belongs to the chaperonin (HSP60) family. In terms of assembly, forms a cylinder of 14 subunits composed of two heptameric rings stacked back-to-back. Interacts with the co-chaperonin GroES.

The protein localises to the cytoplasm. The catalysed reaction is ATP + H2O + a folded polypeptide = ADP + phosphate + an unfolded polypeptide.. Functionally, together with its co-chaperonin GroES, plays an essential role in assisting protein folding. The GroEL-GroES system forms a nano-cage that allows encapsulation of the non-native substrate proteins and provides a physical environment optimized to promote and accelerate protein folding. The polypeptide is Chaperonin GroEL (Streptococcus gordonii).